The sequence spans 397 residues: Acetate kinase (397 aa).

N9 contacts Mg(2+). K16 is an ATP binding site. R87 contacts substrate. Catalysis depends on D144, which acts as the Proton donor/acceptor. Residues 204-208 (HLGNG), 279-281 (DCR), and 327-331 (GIGEN) each bind ATP. A Mg(2+)-binding site is contributed by E381.

It belongs to the acetokinase family. Homodimer. Mg(2+) serves as cofactor. Requires Mn(2+) as cofactor.

The protein localises to the cytoplasm. It carries out the reaction acetate + ATP = acetyl phosphate + ADP. The protein operates within metabolic intermediate biosynthesis; acetyl-CoA biosynthesis; acetyl-CoA from acetate: step 1/2. Catalyzes the formation of acetyl phosphate from acetate and ATP. Can also catalyze the reverse reaction. In Chromobacterium violaceum (strain ATCC 12472 / DSM 30191 / JCM 1249 / CCUG 213 / NBRC 12614 / NCIMB 9131 / NCTC 9757 / MK), this protein is Acetate kinase.